The sequence spans 402 residues: Clusterin-associated protein 1 (402 aa).

Positions 187–297 form a coiled coil; that stretch reads KTKDLLNNVA…KEEEKRLLKS (111 aa). The interval 292 to 402 is disordered; sequence KRLLKSGSND…EPLDESDNDF (111 aa). Composition is skewed to acidic residues over residues 301-317 and 349-377; these read DDSDIDIQEDDESDSEL and DSDEDEDSEDSEMNMEDDEEDDDDLEDES. Phosphoserine occurs at positions 303, 313, and 315. Residue S398 is modified to Phosphoserine.

It belongs to the CLUAP1 family. In terms of assembly, interacts with CLU/clusterin. Interacts with UBXN10; the interaction is direct.

The protein localises to the cell projection. Its subcellular location is the cilium. The protein resides in the nucleus. Its function is as follows. Required for cilia biogenesis. Appears to function within the multiple intraflagellar transport complex B (IFT-B). Key regulator of hedgehog signaling. The chain is Clusterin-associated protein 1 (Cluap1) from Rattus norvegicus (Rat).